Here is a 1499-residue protein sequence, read N- to C-terminus: Condensin complex subunit 1 (1499 aa).

Disordered regions lie at residues Met-1–Ser-43 and Ile-1421–Asp-1499. Positions Pro-1432–Ala-1446 are enriched in low complexity. 2 stretches are compositionally biased toward acidic residues: residues Ser-1458–Asp-1467 and Ala-1486–Asp-1499.

It belongs to the CND1 (condensin subunit 1) family. Component of the condensin I complex, which contains the mix-1/SMC2 and smc-4/SMC4 heterodimer, and three non SMC subunits that probably regulate the complex: dpy-26, capg-1 and dpy-28. Within the complex, interacts with dpy-26 and smc-4. Component of the dosage compensation complex, which consist of the condensin I like components mix-1/SMC2 and dpy-27/SMC4, and the three non SMC subunits dpy-26, capg-1 and dpy-28. Within the complex, interacts with mix-1, dpy-27, dpy-26 and capg-1. Interacts with smcl-1. Sumoylated. Sumoylated in the context of the dosage compensation complex but not in the condensin I complex. Sumoylation is important for assembly of the dosage compensation complex and its robust binding to the X chromosome. In terms of tissue distribution, expressed in somatic and germline tissues (at protein level).

It is found in the nucleus. The protein localises to the chromosome. Required for both chromosome condensation and segregation during mitosis and meiosis and X-chromosome dosage compensation depending on its binding partners. Regulatory subunit of the condensin I complex, a complex required for conversion of interphase chromatin into mitotic-like condense chromosomes. The condensin I complex probably introduces positive supercoils into relaxed DNA in the presence of type I topoisomerases and converts nicked DNA into positive knotted forms in the presence of type II topoisomerases. The condensin I complex function is required for proper chromosome segregation in mitosis and meiosis. As a member of the condensin I complex, further controls the crossover number and distribution in meiosis by restricting double strand break formation, possibly by influencing higher-order chromosome structure. Plays a role in robust cytokinesis upon presence of chromatin obstructions. Also a member of the condensin I-like dosage compensation complex that associates specifically with hermaphrodite X chromosomes to reduce their gene transcription during interphase, possibly through chromatin reorganization. This chain is Condensin complex subunit 1, found in Caenorhabditis elegans.